The primary structure comprises 701 residues: Heterodisulfide reductase subunit A-like protein (701 aa).

FAD is bound at residue 152–175; the sequence is GGGIAGIFAALDIANAGYKVYLVE. Positions 239-268 constitute a 4Fe-4S ferredoxin-type 1 domain; it reads KQTWVDWDLCTGCGACTDVCPPKARVPDEF. Cys248, Cys251, Cys254, Cys326, Cys627, Cys630, Cys633, Cys637, Cys660, Cys663, Cys666, and Cys670 together coordinate [4Fe-4S] cluster. 2 consecutive 4Fe-4S ferredoxin-type domains span residues 618–647 and 651–680; these read LVSE…MTKY and MRAE…LHGF.

Belongs to the HdrA family. The heterodisulfide reductase is composed of three subunits; HdlA, HdlB and HdlC. It forms a complex with the F420-non-reducing hydrogenase (Mvh), which provides the reducing equivalents to the heterodisulfide reductase. It depends on [4Fe-4S] cluster as a cofactor. The cofactor is FAD.

It is found in the cytoplasm. Its function is as follows. Has oxidoreductase activity. The Hdl and Mvh subunits may together mediate electron transfer from hydrogen to an unidentified electron acceptor on the cytoplasmic side of the membrane. This Archaeoglobus profundus (strain DSM 5631 / JCM 9629 / NBRC 100127 / Av18) protein is Heterodisulfide reductase subunit A-like protein (hdlA).